Here is a 445-residue protein sequence, read N- to C-terminus: Type II methyltransferase M.Bpa9945I (445 aa).

One can recognise an SAM-dependent MTase C5-type domain in the interval M1–H444. C136 is a catalytic residue.

The protein belongs to the class I-like SAM-binding methyltransferase superfamily. C5-methyltransferase family.

It is found in the cytoplasm. The catalysed reaction is a 2'-deoxycytidine in DNA + S-adenosyl-L-methionine = a 5-methyl-2'-deoxycytidine in DNA + S-adenosyl-L-homocysteine + H(+). Its function is as follows. Component of antiviral defense system DISARM (defense island system associated with restriction-modification), composed of DrmE, DrmA, DrmB, DrmC and DrmMII. DISARM is probably a multi-gene restriction module, this subunit is a DNA methylase. Expression of DISARM in B.subtilis (strain BEST7003) confers resistance to phages Nf, phi29, phi105, phi3T, SPO1, SPR and SPP1. Protection is over 10(7)-fold against phi3T, 10(4)-10(5)-fold against Nf, phi29, phi105 and SPR, 100-fold against SPO1 and 10-fold against SPP1. DISARM does not interfere with phage adsorption, but instead interferes with (phi3T) DNA replication early in its cycle, preventing replication, circularization and lysogeny and probably causes phage DNA degradation (DNA is degraded in SPP1-infected cells). Expression of this methylase alone leads to highly methylated phage, however they are still susceptible to the DISARM system. A methylase, recognizes the double-stranded sequence 5'-CCWGG-3', methylates C-2 on both strands. Phage Nf does not have any 5'-CCWGG-3' motifs but is still targeted by the DISARM system. This Bacillus paralicheniformis (strain ATCC 9945a / NCIMB 11709 / CD-2) protein is Type II methyltransferase M.Bpa9945I.